The sequence spans 235 residues: Nucleoside diphosphate kinase 4, chloroplastic (235 aa).

6 residues coordinate ATP: K93, F141, R169, T175, R186, and N196. The active-site Pros-phosphohistidine intermediate is H199.

This sequence belongs to the NDK family. Homohexamer. Requires Mg(2+) as cofactor.

Its subcellular location is the plastid. It localises to the chloroplast thylakoid lumen. The catalysed reaction is a 2'-deoxyribonucleoside 5'-diphosphate + ATP = a 2'-deoxyribonucleoside 5'-triphosphate + ADP. It catalyses the reaction a ribonucleoside 5'-diphosphate + ATP = a ribonucleoside 5'-triphosphate + ADP. Its function is as follows. Major role in the synthesis of nucleoside triphosphates other than ATP. The ATP gamma phosphate is transferred to the NDP beta phosphate via a ping-pong mechanism, using a phosphorylated active-site intermediate. Shows the highest specificity towards GDP. This is Nucleoside diphosphate kinase 4, chloroplastic (NDK4) from Spinacia oleracea (Spinach).